A 580-amino-acid polypeptide reads, in one-letter code: Proline--tRNA ligase (580 aa).

Belongs to the class-II aminoacyl-tRNA synthetase family. ProS type 1 subfamily. As to quaternary structure, homodimer.

It localises to the cytoplasm. It carries out the reaction tRNA(Pro) + L-proline + ATP = L-prolyl-tRNA(Pro) + AMP + diphosphate. Functionally, catalyzes the attachment of proline to tRNA(Pro) in a two-step reaction: proline is first activated by ATP to form Pro-AMP and then transferred to the acceptor end of tRNA(Pro). As ProRS can inadvertently accommodate and process non-cognate amino acids such as alanine and cysteine, to avoid such errors it has two additional distinct editing activities against alanine. One activity is designated as 'pretransfer' editing and involves the tRNA(Pro)-independent hydrolysis of activated Ala-AMP. The other activity is designated 'posttransfer' editing and involves deacylation of mischarged Ala-tRNA(Pro). The misacylated Cys-tRNA(Pro) is not edited by ProRS. The sequence is that of Proline--tRNA ligase from Mycobacteroides abscessus (strain ATCC 19977 / DSM 44196 / CCUG 20993 / CIP 104536 / JCM 13569 / NCTC 13031 / TMC 1543 / L948) (Mycobacterium abscessus).